A 598-amino-acid polypeptide reads, in one-letter code: Arginine--tRNA ligase (598 aa).

The 'HIGH' region motif lies at 140-150; the sequence is ANPTGPLHVGH.

It belongs to the class-I aminoacyl-tRNA synthetase family. As to quaternary structure, monomer.

It is found in the cytoplasm. It catalyses the reaction tRNA(Arg) + L-arginine + ATP = L-arginyl-tRNA(Arg) + AMP + diphosphate. This is Arginine--tRNA ligase from Synechococcus sp. (strain JA-3-3Ab) (Cyanobacteria bacterium Yellowstone A-Prime).